An 813-amino-acid chain; its full sequence is Histone acetyltransferase KAT2B (813 aa).

Disordered regions lie at residues 1 to 55 (MAEA…GGSA) and 380 to 423 (NSTS…EAKR). Positions 32–46 (ASCGPATAVAAAGTA) are enriched in low complexity. Residues 380-391 (NSTSHEQINGGR) show a composition bias toward polar residues. Over residues 406–423 (PGEKRKMNNSHAPEEAKR) the composition is skewed to basic and acidic residues. An N-acetyltransferase domain is found at 484–632 (LNQKPNKKIL…GATLMGCELN (149 aa)). Glu-551 acts as the Proton donor/acceptor in catalysis. Acetyl-CoA is bound by residues 555–557 (CAV), 562–568 (QVKGYGT), and 593–596 (YAIG). A Bromo domain is found at 704–808 (KDPEQLYSTL…KFFFSKIKEA (105 aa)).

Belongs to the acetyltransferase family. GCN5 subfamily. In terms of assembly, interacts with BCAS3. Interacts with SIRT1. Interacts with EP300, CREBBP and DDX17. Component of a large chromatin remodeling complex, at least composed of MYSM1, KAT2B/PCAF, RBM10 and KIF11/TRIP5. Interacts with KLF1; the interaction does not acetylate KLF1 and there is no enhancement of its transactivational activity. Interacts with NFE4. Interacts with MECOM. Interacts with NR2C2 (hypophosphorylated and unsumoylated form); the interaction promotes the transactivation activity of NR2C2. Interacts with NFE4. Interacts with MECOM. Interacts with E2F1; the interaction acetylates E2F1 augmenting its DNA-binding and transcriptional activity. Interacts with NPAS2, BMAL1 and CLOCK. Interacts (unsumoylated form) with NR2C1; the interaction promotes transactivation activity. Interacts with CEBPB. Interacts with NR4A3. Interacts with TBX5. Interacts with PLK4. Interacts with RB1; this interaction leads to RB1 acetylation. Interacts with VRK1.

Its subcellular location is the nucleus. The protein localises to the cytoplasm. It localises to the cytoskeleton. It is found in the microtubule organizing center. The protein resides in the centrosome. The catalysed reaction is L-lysyl-[histone] + acetyl-CoA = N(6)-acetyl-L-lysyl-[histone] + CoA + H(+). It catalyses the reaction L-lysyl-[protein] + acetyl-CoA = N(6)-acetyl-L-lysyl-[protein] + CoA + H(+). It carries out the reaction spermidine + acetyl-CoA = N(8)-acetylspermidine + CoA + H(+). In terms of biological role, functions as a histone acetyltransferase (HAT) to promote transcriptional activation. Has significant histone acetyltransferase activity with core histones (H3 and H4), and also with nucleosome core particles. Has a a strong preference for acetylation of H3 at 'Lys-9' (H3K9ac). Also acetylates non-histone proteins, such as ACLY, MAPRE1/EB1, PLK4, RRP9/U3-55K and TBX5. Acts as a circadian transcriptional coactivator which enhances the activity of the circadian transcriptional activators: NPAS2-BMAL1 and CLOCK-BMAL1 heterodimers. Involved in heart and limb development by mediating acetylation of TBX5, acetylation regulating nucleocytoplasmic shuttling of TBX5. Acts as a negative regulator of centrosome amplification by mediating acetylation of PLK4. Acetylates RRP9/U3-55K, a core subunit of the U3 snoRNP complex, impairing pre-rRNA processing. Acetylates MAPRE1/EB1, promoting dynamic kinetochore-microtubule interactions in early mitosis. Also acetylates spermidine. In Mus musculus (Mouse), this protein is Histone acetyltransferase KAT2B.